A 25-amino-acid polypeptide reads, in one-letter code: Caerin-2.4 (25 aa).

In terms of tissue distribution, expressed by the skin parotoid and/or rostral glands.

It is found in the secreted. Its function is as follows. Antibacterial peptide, that adopts an alpha helical conformation which can disrupt bacterial membranes. Each caerin displays a different antimicrobial specificity. The chain is Caerin-2.4 from Ranoidea caerulea (Green tree frog).